We begin with the raw amino-acid sequence, 900 residues long: Formin-like protein 5 (900 aa).

The helical; Signal-anchor transmembrane segment at 15–32 (SRLVFWLILFSGLLVITL) threads the bilayer. The tract at residues 136–209 (RNLATKPGSS…PVSPAKKKED (74 aa)) is disordered. Pro residues predominate over residues 160-173 (PPRPPTRPKSPPPR). The chain crosses the membrane as a helical span at residues 214-234 (IIIAVVVTAVSTFLLAALFFL). Disordered stretches follow at residues 273–440 (SVKG…DAPK) and 849–900 (ARGR…SDSD). Over residues 281–304 (HQSFNIYSNQGKMSSFDGSNSDTS) the composition is skewed to polar residues. Basic and acidic residues predominate over residues 307–316 (LEERLSHEGL). The segment covering 359 to 368 (FLKVSSKKAS) has biased composition (low complexity). Residues 369–429 (APPPPVPAPQ…GPKAPRPPSG (61 aa)) are compositionally biased toward pro residues. In terms of domain architecture, FH2 spans 433–865 (ALDDDAPKTK…MARKQGSTAS (433 aa)). The segment covering 860–876 (QGSTASASSETPRQTPS) has biased composition (polar residues).

Belongs to the formin-like family. Class-I subfamily. As to expression, expressed in the endosperm. Localizes to the cell plate, a plant-specific membranous component that is assembled at the plane of cell division.

The protein resides in the membrane. Its function is as follows. Might be involved in the organization and polarity of the actin cytoskeleton. Interacts with the barbed end of actin filaments and nucleates actin-filament polymerization in vitro. Seems to play a role in cytokinesis. The protein is Formin-like protein 5 (FH5) of Arabidopsis thaliana (Mouse-ear cress).